Here is a 252-residue protein sequence, read N- to C-terminus: Probable aquaporin TIP1-2 (252 aa).

2 consecutive transmembrane segments (helical) span residues 24 to 44 (VAEF…GMAF) and 57 to 77 (GLIA…AVGA). Residues 85–87 (NPA) carry the NPA 1 motif. Transmembrane regions (helical) follow at residues 115-137 (VVAC…SLSA), 144-164 (AVVF…ATAV), and 173-193 (VIAP…GGAF). The NPA 2 motif lies at 199-201 (NPA). Residues 220–240 (WLGPFVGAAIAALIYDIIFIG) form a helical membrane-spanning segment.

This sequence belongs to the MIP/aquaporin (TC 1.A.8) family. TIP (TC 1.A.8.10) subfamily. In terms of tissue distribution, expressed in leaves.

The protein resides in the vacuole membrane. In terms of biological role, aquaporins facilitate the transport of water and small neutral solutes across cell membranes. May be involved in transport from the vacuolar compartment to the cytoplasm. The polypeptide is Probable aquaporin TIP1-2 (TIP1-2) (Oryza sativa subsp. japonica (Rice)).